Consider the following 445-residue polypeptide: Tubulin beta-7 chain (445 aa).

The GTP site is built by Q11, E69, S138, G142, T143, G144, N204, and N226. E69 serves as a coordination point for Mg(2+). The interval 421 to 445 (EYQQYQDATAEDEEYEEEEEEEEET) is disordered. The segment covering 429–445 (TAEDEEYEEEEEEEEET) has biased composition (acidic residues).

Belongs to the tubulin family. In terms of assembly, dimer of alpha and beta chains. A typical microtubule is a hollow water-filled tube with an outer diameter of 25 nm and an inner diameter of 15 nM. Alpha-beta heterodimers associate head-to-tail to form protofilaments running lengthwise along the microtubule wall with the beta-tubulin subunit facing the microtubule plus end conferring a structural polarity. Microtubules usually have 13 protofilaments but different protofilament numbers can be found in some organisms and specialized cells. The cofactor is Mg(2+).

The protein localises to the cytoplasm. Its subcellular location is the cytoskeleton. Functionally, tubulin is the major constituent of microtubules, a cylinder consisting of laterally associated linear protofilaments composed of alpha- and beta-tubulin heterodimers. Microtubules grow by the addition of GTP-tubulin dimers to the microtubule end, where a stabilizing cap forms. Below the cap, tubulin dimers are in GDP-bound state, owing to GTPase activity of alpha-tubulin. The sequence is that of Tubulin beta-7 chain (TUBB7) from Zea mays (Maize).